A 313-amino-acid polypeptide reads, in one-letter code: PDCD10 and GCKIII kinases-associated protein 1 (313 aa).

A disordered region spans residues 40–89 (RLKGTQNSEVEVPRNALHDGSLSNSESRGSTTGLPHQGPLPQEDSEERPC). 2 positions are modified to phosphoserine: S60 and S64. Polar residues predominate over residues 60 to 73 (SLSNSESRGSTTGL). T104 is subject to Phosphothreonine. S107, S237, and S240 each carry phosphoserine. The segment at 253 to 286 (YFKEEGPTHPTPAADSGSEREDPHTYNGDREGVV) is disordered. Residues 269–285 (GSEREDPHTYNGDREGV) are compositionally biased toward basic and acidic residues.

In terms of assembly, interacts with KEAP1; this interaction prevents the ubiquitination of KEAP1 by TRIM25, thus protecting KEAP1 from degradation. Found in association with PDCD10 and members of the STE20 kinases, such as STK24, STK25 and STK26.

It is found in the cell membrane. Acts as a tumor suppressor. Acts as a tumor suppressor for colorectal cancer cell proliferation by targeting KEAP1/USP17/ELK1/CDK6 axis. The polypeptide is PDCD10 and GCKIII kinases-associated protein 1 (Mus musculus (Mouse)).